The primary structure comprises 119 residues: Acidic phospholipase A2 CM-II (119 aa).

Cystine bridges form between C11-C71, C26-C118, C28-C44, C43-C99, C50-C92, C60-C85, and C78-C90. Ca(2+)-binding residues include F27, G29, and G31. Residue H47 is part of the active site. Residue D48 coordinates Ca(2+). Residue D93 is part of the active site.

This sequence belongs to the phospholipase A2 family. Group I subfamily. D49 sub-subfamily. It depends on Ca(2+) as a cofactor. In terms of tissue distribution, expressed by the venom gland.

The protein localises to the secreted. It carries out the reaction a 1,2-diacyl-sn-glycero-3-phosphocholine + H2O = a 1-acyl-sn-glycero-3-phosphocholine + a fatty acid + H(+). PLA2 catalyzes the calcium-dependent hydrolysis of the 2-acyl groups in 3-sn-phosphoglycerides. This Aspidelaps scutatus (Shield-nose snake) protein is Acidic phospholipase A2 CM-II.